The chain runs to 694 residues: Nucleolin (694 aa).

The disordered stretch occupies residues 1-277; that stretch reads MVKLAKTPKN…EAKKKKTETP (277 aa). Acidic residues predominate over residues 26-40; that stretch reads ESEEEESSDLEESSG. Positions 46-108 are enriched in low complexity; sequence PPKKQQKAAV…AVVGKGAKNG (63 aa). A run of 5 repeats spans residues 55–61, 62–68, 69–75, 76–82, and 84–90. Residues 55–90 are 5 X 7 AA tandem repeats of X-T-P-X-K-K-X; the sequence is VTPAKKAATPAKKAATPAKKAVTPAKKAVATPAKKA. Phosphoserine is present on residues S116 and S136. Acidic residues predominate over residues 116–142; the sequence is SEEEDEDDEDDEEDEDEEEESDEEEEP. Positions 143-168 are enriched in low complexity; sequence AVPVKPAAKKSAAAVPAKKPAVVPAK. Position 171 is a phosphoserine (S171). Residues 171–194 show a composition bias toward acidic residues; that stretch reads SEEEEEEDDEEEDEEDDESEDEAM. Over residues 196–213 the composition is skewed to low complexity; it reads TTPAPVKKPTPAKATPAK. Over residues 218-246 the composition is skewed to acidic residues; that stretch reads SEDEEDEEDEDEDEEDEDDEEEDEEESED. RRM domains follow at residues 281-357, 371-445, 461-535, and 553-628; these read FSLF…KAKS, RTLF…YTGE, KTLI…FSSP, and KTLF…FAKP. A disordered region spans residues 631–694; the sequence is EFQRGGGFGG…KPQGKKIKFE (64 aa). Residues 633–680 are compositionally biased toward gly residues; that stretch reads QRGGGFGGGFGGRGGRGGRGGGRGGFGGRGGGRGFGGRGGGFRGGRGG. Basic and acidic residues predominate over residues 681–694; the sequence is GGDHKPQGKKIKFE.

Highly phosphorylated during mitosis.

It is found in the nucleus. It localises to the nucleolus. Functionally, nucleolin is the major nucleolar protein of growing eukaryotic cells. It is found associated with intranucleolar chromatin and pre-ribosomal particles. It induces chromatin decondensation by binding to histone H1. It is thought to play a role in pre-rRNA transcription and ribosome assembly. This Gallus gallus (Chicken) protein is Nucleolin (NCL).